Here is a 318-residue protein sequence, read N- to C-terminus: tRNA pseudouridine synthase B (318 aa).

D47 functions as the Nucleophile in the catalytic mechanism.

This sequence belongs to the pseudouridine synthase TruB family. Type 1 subfamily.

The catalysed reaction is uridine(55) in tRNA = pseudouridine(55) in tRNA. Responsible for synthesis of pseudouridine from uracil-55 in the psi GC loop of transfer RNAs. In Shewanella putrefaciens (strain CN-32 / ATCC BAA-453), this protein is tRNA pseudouridine synthase B.